We begin with the raw amino-acid sequence, 252 residues long: MMLHAQHMPGQPGAPSLVFLHGFSGDCREWQPVGEQFHGCSRLYIDLPGHGGSAAIPVGRFADVIRLLRATLISYNILKFWLVGYSLGGRVAMMAACQGIPGLCGLVVEGGHPGLQNEQARAERRLSDGRWAERFRREPLTEVFHDWYQQPVFASLTAQQRQALTALRSQNNGETLAAMLEATSLAAQPDLREALNALAFPFYYLCGERDSKFRALAQEVAATCHVIRNAGHNAHRENPAGVVDSLAQILRL.

It belongs to the AB hydrolase superfamily. MenH family. In terms of assembly, monomer.

The catalysed reaction is 5-enolpyruvoyl-6-hydroxy-2-succinyl-cyclohex-3-ene-1-carboxylate = (1R,6R)-6-hydroxy-2-succinyl-cyclohexa-2,4-diene-1-carboxylate + pyruvate. The protein operates within quinol/quinone metabolism; 1,4-dihydroxy-2-naphthoate biosynthesis; 1,4-dihydroxy-2-naphthoate from chorismate: step 3/7. It functions in the pathway quinol/quinone metabolism; menaquinone biosynthesis. In terms of biological role, catalyzes a proton abstraction reaction that results in 2,5-elimination of pyruvate from 2-succinyl-5-enolpyruvyl-6-hydroxy-3-cyclohexene-1-carboxylate (SEPHCHC) and the formation of 2-succinyl-6-hydroxy-2,4-cyclohexadiene-1-carboxylate (SHCHC). The chain is 2-succinyl-6-hydroxy-2,4-cyclohexadiene-1-carboxylate synthase from Salmonella choleraesuis (strain SC-B67).